The following is a 76-amino-acid chain: Translation initiation factor IF-1 (76 aa).

Positions 1-72 constitute an S1-like domain; sequence MAKKDVVVMQ…NKGRIVKREK (72 aa).

Belongs to the IF-1 family. Component of the 30S ribosomal translation pre-initiation complex which assembles on the 30S ribosome in the order IF-2 and IF-3, IF-1 and N-formylmethionyl-tRNA(fMet); mRNA recruitment can occur at any time during PIC assembly.

The protein localises to the cytoplasm. In terms of biological role, one of the essential components for the initiation of protein synthesis. Stabilizes the binding of IF-2 and IF-3 on the 30S subunit to which N-formylmethionyl-tRNA(fMet) subsequently binds. Helps modulate mRNA selection, yielding the 30S pre-initiation complex (PIC). Upon addition of the 50S ribosomal subunit IF-1, IF-2 and IF-3 are released leaving the mature 70S translation initiation complex. In Petrotoga mobilis (strain DSM 10674 / SJ95), this protein is Translation initiation factor IF-1.